The following is a 673-amino-acid chain: UPF0313 protein blr7973 (673 aa).

A Radical SAM core domain is found at 332-611; it reads AWDMIKFSVT…KAFLRYHDPD (280 aa). [4Fe-4S] cluster-binding residues include Cys-346, Cys-350, and Cys-353. The segment at 632 to 673 is disordered; sequence RPDQLVPAHQPPGTGKAAGTRRPVRPGGKTQRFTTKGLRVMK.

This sequence belongs to the UPF0313 family. The cofactor is [4Fe-4S] cluster.

This is UPF0313 protein blr7973 from Bradyrhizobium diazoefficiens (strain JCM 10833 / BCRC 13528 / IAM 13628 / NBRC 14792 / USDA 110).